A 365-amino-acid polypeptide reads, in one-letter code: MAVMPPRTLLLLLSGALALTQTWAGSHSMRYFYTSVSRPGRGEPRFIAVGYVDDTQFVRFDSDAASQRMEPRAPWIEQEGPEYWDQETRNMKASAQTDRVDLGTLRGYYNQSEDGSHTIQIMYGCDVGSDGRFLRGYRQDAYDGKDYIALNEDLRSWTAAAMAAQITKRKWEAAHAAEQLRAYLEGRCVEWLRRYLENGKETLQRTDPPKTHMTHHPISDHEATLRCWALGFYPAVITLTWQRDGEDQTQDTELVETRPAGDGTFQKWAAVVVPSGEEQRYTCHVQHEGLPKPLTLRWEPSSQPTIPIVGIIAGLVLLGAVITGAVVAAVMWRRKSSDRKGGSYTQAASSDSAQGSDVSLTACKV.

An N-terminal signal peptide occupies residues 1 to 24 (MAVMPPRTLLLLLSGALALTQTWA). An alpha-1 region spans residues 25–114 (GSHSMRYFYT…LRGYYNQSED (90 aa)). Residues 25-308 (GSHSMRYFYT…EPSSQPTIPI (284 aa)) lie on the Extracellular side of the membrane. An N-linked (GlcNAc...) asparagine glycan is attached at Asn-110. Residues 115–206 (GSHTIQIMYG…ENGKETLQRT (92 aa)) form an alpha-2 region. 2 cysteine pairs are disulfide-bonded: Cys-125-Cys-188 and Cys-227-Cys-283. The interval 207-298 (DPPKTHMTHH…GLPKPLTLRW (92 aa)) is alpha-3. Residues 209–295 (PKTHMTHHPI…QHEGLPKPLT (87 aa)) enclose the Ig-like C1-type domain. A connecting peptide region spans residues 299–308 (EPSSQPTIPI). Residues 309–332 (VGIIAGLVLLGAVITGAVVAAVMW) form a helical membrane-spanning segment. Topologically, residues 333–365 (RRKSSDRKGGSYTQAASSDSAQGSDVSLTACKV) are cytoplasmic. Residues 339–360 (RKGGSYTQAASSDSAQGSDVSL) are disordered. Phosphoserine is present on Ser-343. Tyr-344 carries the phosphotyrosine modification. Positions 346–359 (QAASSDSAQGSDVS) are enriched in low complexity. Ser-349, Ser-350, Ser-352, Ser-356, and Ser-359 each carry phosphoserine.

This sequence belongs to the MHC class I family. In terms of assembly, heterodimer of an alpha chain and a beta chain (beta-2-microglobulin).

Its subcellular location is the membrane. Involved in the presentation of foreign antigens to the immune system. The sequence is that of Patr class I histocompatibility antigen, A-108 alpha chain (Patr-A) from Pan troglodytes (Chimpanzee).